The primary structure comprises 424 residues: Elongation factor 1-alpha (424 aa).

A tr-type G domain is found at 5-223 (KPHLNLITIG…DAFKVPEKPI (219 aa)). The segment at 14–21 (GHVDHGKS) is G1. GTP is bound at residue 14 to 21 (GHVDHGKS). Serine 21 serves as a coordination point for Mg(2+). Residues 70–74 (GVTID) are G2. The interval 91-94 (DAPG) is G3. GTP-binding positions include 91–95 (DAPGH) and 148–151 (NKMD). The tract at residues 148-151 (NKMD) is G4. Residues 187–189 (SGY) are G5.

This sequence belongs to the TRAFAC class translation factor GTPase superfamily. Classic translation factor GTPase family. EF-Tu/EF-1A subfamily.

The protein resides in the cytoplasm. The catalysed reaction is GTP + H2O = GDP + phosphate + H(+). Functionally, GTP hydrolase that promotes the GTP-dependent binding of aminoacyl-tRNA to the A-site of ribosomes during protein biosynthesis. This chain is Elongation factor 1-alpha, found in Thermoplasma volcanium (strain ATCC 51530 / DSM 4299 / JCM 9571 / NBRC 15438 / GSS1).